Reading from the N-terminus, the 93-residue chain is Large ribosomal subunit protein uL23cz/uL23cy (93 aa).

This sequence belongs to the universal ribosomal protein uL23 family. In terms of assembly, part of the 50S ribosomal subunit.

The protein localises to the plastid. It localises to the chloroplast. Its function is as follows. Binds to 23S rRNA. The polypeptide is Large ribosomal subunit protein uL23cz/uL23cy (rpl23-A) (Lactuca sativa (Garden lettuce)).